Consider the following 228-residue polypeptide: Octanoyltransferase (228 aa).

In terms of domain architecture, BPL/LPL catalytic spans G31–F212. Residues R76–H83, A143–G145, and G156–A158 each bind substrate. Catalysis depends on C174, which acts as the Acyl-thioester intermediate.

This sequence belongs to the LipB family.

The protein resides in the cytoplasm. It catalyses the reaction octanoyl-[ACP] + L-lysyl-[protein] = N(6)-octanoyl-L-lysyl-[protein] + holo-[ACP] + H(+). Its pathway is protein modification; protein lipoylation via endogenous pathway; protein N(6)-(lipoyl)lysine from octanoyl-[acyl-carrier-protein]: step 1/2. Functionally, catalyzes the transfer of endogenously produced octanoic acid from octanoyl-acyl-carrier-protein onto the lipoyl domains of lipoate-dependent enzymes. Lipoyl-ACP can also act as a substrate although octanoyl-ACP is likely to be the physiological substrate. In Thermoanaerobacter sp. (strain X514), this protein is Octanoyltransferase.